Consider the following 431-residue polypeptide: Tol-Pal system protein TolB (431 aa).

The N-terminal stretch at Met-1–Ala-26 is a signal peptide. Positions Asp-406 to Gln-431 are disordered.

Belongs to the TolB family. As to quaternary structure, the Tol-Pal system is composed of five core proteins: the inner membrane proteins TolA, TolQ and TolR, the periplasmic protein TolB and the outer membrane protein Pal. They form a network linking the inner and outer membranes and the peptidoglycan layer.

The protein resides in the periplasm. In terms of biological role, part of the Tol-Pal system, which plays a role in outer membrane invagination during cell division and is important for maintaining outer membrane integrity. The chain is Tol-Pal system protein TolB from Burkholderia cenocepacia (strain ATCC BAA-245 / DSM 16553 / LMG 16656 / NCTC 13227 / J2315 / CF5610) (Burkholderia cepacia (strain J2315)).